Here is a 411-residue protein sequence, read N- to C-terminus: Multidrug resistance protein MdtH (411 aa).

Helical transmembrane passes span 13–33, 45–65, 73–95, 99–116, 139–159, 165–185, 213–233, 243–263, 288–308, 340–360, and 365–385; these read YFLL…FPLI, ALLV…LGIF, LGAK…FMGI, PWLL…GTLF, LLMI…SWLL, LVCL…AWLL, YVFT…ILPI, AAVR…LYPI, IIPI…GIFY, LGLA…YDMG, and IPQL…LGFY.

The protein belongs to the major facilitator superfamily. DHA1 family. MdtH (TC 2.A.1.2.21) subfamily.

The protein localises to the cell membrane. The chain is Multidrug resistance protein MdtH from Baumannia cicadellinicola subsp. Homalodisca coagulata.